The primary structure comprises 143 residues: MAKKKVVTQIKLQCPAGKATPAPPIGPALGPHGVSAPQFVQQFNDRTKSMEPGLVIPVVITVYADKSFTFILKTPPASVLIKKACKIEKGSATSVTAKVGKLSKAALEEIAKTKMPDINANDIEAAKKIIAGTARSMGVEVER.

It belongs to the universal ribosomal protein uL11 family. As to quaternary structure, part of the ribosomal stalk of the 50S ribosomal subunit. Interacts with L10 and the large rRNA to form the base of the stalk. L10 forms an elongated spine to which L12 dimers bind in a sequential fashion forming a multimeric L10(L12)X complex. In terms of processing, one or more lysine residues are methylated.

In terms of biological role, forms part of the ribosomal stalk which helps the ribosome interact with GTP-bound translation factors. This is Large ribosomal subunit protein uL11 from Treponema denticola (strain ATCC 35405 / DSM 14222 / CIP 103919 / JCM 8153 / KCTC 15104).